Reading from the N-terminus, the 339-residue chain is Ketol-acid reductoisomerase (NADP(+)) (339 aa).

The KARI N-terminal Rossmann domain maps to 1-182 (MRVYYDRDAD…GGGRAGIIET (182 aa)). Residues 24–27 (YGSQ), arginine 48, serine 51, serine 53, and 83–86 (DELQ) each bind NADP(+). Residue histidine 108 is part of the active site. Glycine 134 lines the NADP(+) pocket. Residues 183-328 (TFKEECETDL…ARLRDMMPWI (146 aa)) enclose the KARI C-terminal knotted domain. 4 residues coordinate Mg(2+): aspartate 191, glutamate 195, glutamate 227, and glutamate 231. Position 252 (serine 252) interacts with substrate.

It belongs to the ketol-acid reductoisomerase family. It depends on Mg(2+) as a cofactor.

It catalyses the reaction (2R)-2,3-dihydroxy-3-methylbutanoate + NADP(+) = (2S)-2-acetolactate + NADPH + H(+). It carries out the reaction (2R,3R)-2,3-dihydroxy-3-methylpentanoate + NADP(+) = (S)-2-ethyl-2-hydroxy-3-oxobutanoate + NADPH + H(+). It functions in the pathway amino-acid biosynthesis; L-isoleucine biosynthesis; L-isoleucine from 2-oxobutanoate: step 2/4. It participates in amino-acid biosynthesis; L-valine biosynthesis; L-valine from pyruvate: step 2/4. Its function is as follows. Involved in the biosynthesis of branched-chain amino acids (BCAA). Catalyzes an alkyl-migration followed by a ketol-acid reduction of (S)-2-acetolactate (S2AL) to yield (R)-2,3-dihydroxy-isovalerate. In the isomerase reaction, S2AL is rearranged via a Mg-dependent methyl migration to produce 3-hydroxy-3-methyl-2-ketobutyrate (HMKB). In the reductase reaction, this 2-ketoacid undergoes a metal-dependent reduction by NADPH to yield (R)-2,3-dihydroxy-isovalerate. This chain is Ketol-acid reductoisomerase (NADP(+)), found in Bradyrhizobium sp. (strain ORS 278).